The chain runs to 476 residues: Aspartyl/glutamyl-tRNA(Asn/Gln) amidotransferase subunit B (476 aa).

Belongs to the GatB/GatE family. GatB subfamily. Heterotrimer of A, B and C subunits.

The catalysed reaction is L-glutamyl-tRNA(Gln) + L-glutamine + ATP + H2O = L-glutaminyl-tRNA(Gln) + L-glutamate + ADP + phosphate + H(+). It carries out the reaction L-aspartyl-tRNA(Asn) + L-glutamine + ATP + H2O = L-asparaginyl-tRNA(Asn) + L-glutamate + ADP + phosphate + 2 H(+). Its function is as follows. Allows the formation of correctly charged Asn-tRNA(Asn) or Gln-tRNA(Gln) through the transamidation of misacylated Asp-tRNA(Asn) or Glu-tRNA(Gln) in organisms which lack either or both of asparaginyl-tRNA or glutaminyl-tRNA synthetases. The reaction takes place in the presence of glutamine and ATP through an activated phospho-Asp-tRNA(Asn) or phospho-Glu-tRNA(Gln). The protein is Aspartyl/glutamyl-tRNA(Asn/Gln) amidotransferase subunit B of Variovorax paradoxus (strain S110).